Reading from the N-terminus, the 445-residue chain is Gamma-glutamyl phosphate reductase (445 aa).

The protein belongs to the gamma-glutamyl phosphate reductase family.

The protein resides in the cytoplasm. The catalysed reaction is L-glutamate 5-semialdehyde + phosphate + NADP(+) = L-glutamyl 5-phosphate + NADPH + H(+). Its pathway is amino-acid biosynthesis; L-proline biosynthesis; L-glutamate 5-semialdehyde from L-glutamate: step 2/2. Functionally, catalyzes the NADPH-dependent reduction of L-glutamate 5-phosphate into L-glutamate 5-semialdehyde and phosphate. The product spontaneously undergoes cyclization to form 1-pyrroline-5-carboxylate. This is Gamma-glutamyl phosphate reductase from Saccharopolyspora erythraea (strain ATCC 11635 / DSM 40517 / JCM 4748 / NBRC 13426 / NCIMB 8594 / NRRL 2338).